Consider the following 322-residue polypeptide: tRNA-dihydrouridine synthase B (322 aa).

Residues 16–18 (PMA) and Gln70 contribute to the FMN site. Cys100 (proton donor) is an active-site residue. FMN-binding positions include Lys139, 200-202 (NGD), and 224-225 (GR).

It belongs to the Dus family. DusB subfamily. The cofactor is FMN.

The catalysed reaction is a 5,6-dihydrouridine in tRNA + NAD(+) = a uridine in tRNA + NADH + H(+). It catalyses the reaction a 5,6-dihydrouridine in tRNA + NADP(+) = a uridine in tRNA + NADPH + H(+). Catalyzes the synthesis of 5,6-dihydrouridine (D), a modified base found in the D-loop of most tRNAs, via the reduction of the C5-C6 double bond in target uridines. This chain is tRNA-dihydrouridine synthase B, found in Shewanella oneidensis (strain ATCC 700550 / JCM 31522 / CIP 106686 / LMG 19005 / NCIMB 14063 / MR-1).